We begin with the raw amino-acid sequence, 156 residues long: Small ribosomal subunit protein uS7c (156 aa).

Belongs to the universal ribosomal protein uS7 family. As to quaternary structure, part of the 30S ribosomal subunit.

Its subcellular location is the plastid. The protein localises to the chloroplast. In terms of biological role, one of the primary rRNA binding proteins, it binds directly to 16S rRNA where it nucleates assembly of the head domain of the 30S subunit. This is Small ribosomal subunit protein uS7c (rps7) from Thalassiosira pseudonana (Marine diatom).